Here is a 263-residue protein sequence, read N- to C-terminus: HTH-type transcriptional repressor NanR (263 aa).

Positions 1–25 (MDVMNAFDSQAEDSPTSLGRSLRRR) are disordered. Residues 30 to 98 (KKLSEMVEEE…NGERARVSRP (69 aa)) enclose the HTH gntR-type domain. The H-T-H motif DNA-binding region spans 58–77 (ERELMAFFNVGRPSVREALA).

It belongs to the NanR family.

Its function is as follows. Transcriptional repressor that controls expression of the genes required for the catabolism of sialic acids. The protein is HTH-type transcriptional repressor NanR of Salmonella schwarzengrund (strain CVM19633).